The primary structure comprises 668 residues: tRNA 5-methylaminomethyl-2-thiouridine biosynthesis bifunctional protein MnmC (668 aa).

A tRNA (mnm(5)s(2)U34)-methyltransferase region spans residues 1 to 245 (MKHYAIQPAN…KREMLCGVME (245 aa)). Positions 270-668 (IGGGIASALL…LLKGKAVKAG (399 aa)) are FAD-dependent cmnm(5)s(2)U34 oxidoreductase.

In the N-terminal section; belongs to the methyltransferase superfamily. tRNA (mnm(5)s(2)U34)-methyltransferase family. The protein in the C-terminal section; belongs to the DAO family. FAD is required as a cofactor.

The protein localises to the cytoplasm. It carries out the reaction 5-aminomethyl-2-thiouridine(34) in tRNA + S-adenosyl-L-methionine = 5-methylaminomethyl-2-thiouridine(34) in tRNA + S-adenosyl-L-homocysteine + H(+). In terms of biological role, catalyzes the last two steps in the biosynthesis of 5-methylaminomethyl-2-thiouridine (mnm(5)s(2)U) at the wobble position (U34) in tRNA. Catalyzes the FAD-dependent demodification of cmnm(5)s(2)U34 to nm(5)s(2)U34, followed by the transfer of a methyl group from S-adenosyl-L-methionine to nm(5)s(2)U34, to form mnm(5)s(2)U34. The sequence is that of tRNA 5-methylaminomethyl-2-thiouridine biosynthesis bifunctional protein MnmC from Escherichia coli (strain SMS-3-5 / SECEC).